The primary structure comprises 155 residues: RNA pyrophosphohydrolase (155 aa).

One can recognise a Nudix hydrolase domain in the interval 5-147; it reads KYRPNVAAII…KRQVYRQVIA (143 aa). Residues 42–63 carry the Nudix box motif; sequence GGIDEGETPLEALHRELLEEIG.

It belongs to the Nudix hydrolase family. RppH subfamily. A divalent metal cation is required as a cofactor.

Functionally, accelerates the degradation of transcripts by removing pyrophosphate from the 5'-end of triphosphorylated RNA, leading to a more labile monophosphorylated state that can stimulate subsequent ribonuclease cleavage. This Helicobacter pylori (strain G27) protein is RNA pyrophosphohydrolase.